The sequence spans 443 residues: Ribulose bisphosphate carboxylase large chain (443 aa).

At K7 the chain carries N6,N6,N6-trimethyllysine. N116 and T166 together coordinate substrate. K168 (proton acceptor) is an active-site residue. Position 170 (K170) interacts with substrate. Mg(2+) is bound by residues K194, D196, and E197. K194 bears the N6-carboxylysine mark. H287 (proton acceptor) is an active-site residue. Substrate contacts are provided by R288, H320, and S372.

This sequence belongs to the RuBisCO large chain family. Type I subfamily. In terms of assembly, heterohexadecamer of 8 large chains and 8 small chains; disulfide-linked. The disulfide link is formed within the large subunit homodimers. Mg(2+) serves as cofactor. The disulfide bond which can form in the large chain dimeric partners within the hexadecamer appears to be associated with oxidative stress and protein turnover.

The protein resides in the plastid. The protein localises to the chloroplast. The catalysed reaction is 2 (2R)-3-phosphoglycerate + 2 H(+) = D-ribulose 1,5-bisphosphate + CO2 + H2O. It carries out the reaction D-ribulose 1,5-bisphosphate + O2 = 2-phosphoglycolate + (2R)-3-phosphoglycerate + 2 H(+). In terms of biological role, ruBisCO catalyzes two reactions: the carboxylation of D-ribulose 1,5-bisphosphate, the primary event in carbon dioxide fixation, as well as the oxidative fragmentation of the pentose substrate in the photorespiration process. Both reactions occur simultaneously and in competition at the same active site. This is Ribulose bisphosphate carboxylase large chain from Abies homolepis (Nikko fir).